The primary structure comprises 290 residues: 4-hydroxybenzoate octaprenyltransferase (290 aa).

8 helical membrane-spanning segments follow: residues 23–43 (IGALLLLWPTLWALWVATPGV), 46–66 (LWILAVFVAGVWLMRAAGCVV), 99–119 (LFVVLVLISFLLVLTLNTMTI), 141–161 (LPQVVLGAAFGWSIPMAFAAV), 163–183 (ESVPLSCWLMFLANILWAVAY), 213–233 (LIIGILQIGVLALMAIIGELN), 234–254 (GLGWGYYWSIVVAGALFVYQQ), and 268–288 (AFMNNNYVGLVLFLGLAMSYW).

This sequence belongs to the UbiA prenyltransferase family. It depends on Mg(2+) as a cofactor.

The protein resides in the cell inner membrane. It carries out the reaction all-trans-octaprenyl diphosphate + 4-hydroxybenzoate = 4-hydroxy-3-(all-trans-octaprenyl)benzoate + diphosphate. It functions in the pathway cofactor biosynthesis; ubiquinone biosynthesis. Its function is as follows. Catalyzes the prenylation of para-hydroxybenzoate (PHB) with an all-trans polyprenyl group. Mediates the second step in the final reaction sequence of ubiquinone-8 (UQ-8) biosynthesis, which is the condensation of the polyisoprenoid side chain with PHB, generating the first membrane-bound Q intermediate 3-octaprenyl-4-hydroxybenzoate. The protein is 4-hydroxybenzoate octaprenyltransferase of Escherichia coli (strain SE11).